The sequence spans 744 residues: C-type polyheme cytochrome OmcB (744 aa).

A signal peptide spans 1–23 (MSRKVTKYSAVLAVSLFAAALAG). Cys-24 is lipidated: N-palmitoyl cysteine. Cys-24 is lipidated: S-diacylglycerol cysteine. The heme c site is built by Cys-48, Cys-51, His-52, Cys-81, Cys-84, His-85, Cys-107, Cys-110, His-111, Cys-141, Cys-144, His-145, Cys-185, Cys-188, His-189, Cys-225, Cys-228, His-229, Cys-303, Cys-306, His-307, Cys-382, Cys-385, His-386, Cys-430, Cys-433, His-434, Cys-480, Cys-483, His-484, Cys-555, Cys-558, His-559, Cys-587, Cys-590, and His-591.

Binds 12 heme c groups per subunit.

The protein resides in the cell outer membrane. In terms of biological role, involved in anaerobic respiration with Fe(3+) as terminal electron acceptor. Acts as an electron-transport mediator in the dissimilatory reduction of Fe(3+). The sequence is that of C-type polyheme cytochrome OmcB (omcB) from Geobacter sulfurreducens (strain DL-1 / KN400).